The sequence spans 234 residues: uncharacterized protein (234 aa).

3 helical membrane passes run 32–52 (GLRT…VSVL), 62–82 (IPAQ…LKEG), and 106–126 (QGLF…NIAL).

It belongs to the MgtC/SapB family.

It is found in the cell membrane. This is an uncharacterized protein from Synechocystis sp. (strain ATCC 27184 / PCC 6803 / Kazusa).